The sequence spans 217 residues: Adenylate kinase (217 aa).

12–17 (GAGKGS) contacts ATP. Residues 32–61 (STGDMFRTHIKGSTPLGLEAKKYTDQGLLV) are NMP. AMP-binding positions include Thr-33, Arg-38, 59–61 (LLV), 87–90 (GYPR), and Gln-94. Residues 128 to 165 (GRRTCPVCGAIYHVDNYPPKVAGICDNDGATLVQRKDD) are LID. Arg-129 provides a ligand contact to ATP. Zn(2+) is bound by residues Cys-132 and Cys-135. 138-139 (IY) serves as a coordination point for ATP. The Zn(2+) site is built by Cys-152 and Asp-155. Residues Arg-162 and Arg-173 each contribute to the AMP site. Residue Gln-201 coordinates ATP.

It belongs to the adenylate kinase family. Monomer.

The protein localises to the cytoplasm. The enzyme catalyses AMP + ATP = 2 ADP. It participates in purine metabolism; AMP biosynthesis via salvage pathway; AMP from ADP: step 1/1. Functionally, catalyzes the reversible transfer of the terminal phosphate group between ATP and AMP. Plays an important role in cellular energy homeostasis and in adenine nucleotide metabolism. The polypeptide is Adenylate kinase (Acholeplasma laidlawii (strain PG-8A)).